A 149-amino-acid chain; its full sequence is Thiosulfate sulfurtransferase RDL2, mitochondrial (149 aa).

The transit peptide at 1–25 (MFKHSTGILSRTVSARSPTLVLRTF) directs the protein to the mitochondrion. Positions 45 to 146 (PNDKKLLVDV…WLAKGGADVK (102 aa)) constitute a Rhodanese domain. Cysteine 106 serves as the catalytic Cysteine persulfide intermediate.

Its subcellular location is the mitochondrion. It catalyses the reaction thiosulfate + hydrogen cyanide = thiocyanate + sulfite + 2 H(+). Functionally, thiosulfate sulfurtransferase which catalyzes the transfer of sulfane sulfur from thiosulfate to cyanide. This is Thiosulfate sulfurtransferase RDL2, mitochondrial (RDL2) from Saccharomyces cerevisiae (strain ATCC 204508 / S288c) (Baker's yeast).